A 392-amino-acid chain; its full sequence is Vascular endothelial growth factor A, long form (392 aa).

2 disordered regions span residues 1-44 (MTDR…VEGV) and 73-174 (DKPI…GPGR). Residues 89 to 104 (PGPEKRGEEEKEEERG) show a composition bias toward basic and acidic residues. Low complexity-rich tracts occupy residues 121–143 (AAVC…ASVP) and 158–174 (PRSP…GPGR). Intrachain disulfides connect C229–C271, C260–C305, and C264–C307. N-linked (GlcNAc...) asparagine glycosylation occurs at N278. Over residues 309-320 (PKKDRTKPEKKS) the composition is skewed to basic and acidic residues. A disordered region spans residues 309–337 (PKKDRTKPEKKSVRGKGKGQKRKRKKSRF). Basic residues predominate over residues 321-337 (VRGKGKGQKRKRKKSRF).

Belongs to the PDGF/VEGF growth factor family. As to quaternary structure, homodimer; disulfide-linked. Also found as heterodimer with PGF. Interacts with NRP1. Interacts with isoform 2 of BSG. Interacts with CD82; this interaction inhibits VEGFA-mediated signaling pathway. Produced by use of an alternative upstream CUG codon and post-translationally processed into the N-terminal N-VEGF form and the C-terminal secreted VEGFA form. In terms of tissue distribution, in developing embryos, expressed mainly in the choroid plexus, paraventricular neuroepithelium, placenta and kidney glomeruli. Also found in bronchial epithelium, adrenal gland and in seminiferous tubules of testis. High expression continues in kidney glomeruli and choroid plexus in adults.

It localises to the cytoplasm. Its subcellular location is the nucleus. It is found in the secreted. The protein localises to the endoplasmic reticulum. The protein resides in the golgi apparatus. It localises to the extracellular space. Its subcellular location is the extracellular matrix. It is found in the cell membrane. Its function is as follows. Participates in the induction of key genes involved in the response to hypoxia and in the induction of angiogenesis such as HIF1A. Involved in protecting cells from hypoxia-mediated cell death. In terms of biological role, growth factor active in angiogenesis, vasculogenesis and endothelial cell growth. Induces endothelial cell proliferation, promotes cell migration, inhibits apoptosis and induces permeabilization of blood vessels. Binds to the FLT1/VEGFR1 and KDR/VEGFR2 receptors, heparan sulfate and heparin. Binds to the NRP1/neuropilin-1 receptor. Binding to NRP1 receptor initiates a signaling pathway needed for motor neuron axon guidance and cell body migration, including for the caudal migration of facial motor neurons from rhombomere 4 to rhombomere 6 during embryonic development. Also binds the DEAR/FBXW7-AS1 receptor. May play a role in increasing vascular permeability during lactation, when increased transport of molecules from the blood is required for efficient milk protein synthesis. The chain is Vascular endothelial growth factor A, long form (Vegfa) from Mus musculus (Mouse).